We begin with the raw amino-acid sequence, 113 residues long: Tubulin-folding cofactor A (113 aa).

The disordered stretch occupies residues 83–113 (LEETDEKEGPEIEDAKKTVADVEKQFPTEDA). Residues 89-113 (KEGPEIEDAKKTVADVEKQFPTEDA) show a composition bias toward basic and acidic residues.

This sequence belongs to the TBCA family. Monomer. Supercomplex made of cofactors A to E. Cofactors A and D function by capturing and stabilizing tubulin in a quasi-native conformation. Cofactor E binds to the cofactor D-tubulin complex; interaction with cofactor C then causes the release of tubulin polypeptides that are committed to the native state. Interacts with TUBB9. As to expression, expressed in leaves, roots, flowers and stems.

Its function is as follows. Tubulin-folding protein involved in the control of the alpha-/beta-tubulin monomer balance. Functions as a reservoir of bound and non-toxic beta-tubulin. Required in the developing embryo. This Arabidopsis thaliana (Mouse-ear cress) protein is Tubulin-folding cofactor A (TFCA).